The following is a 289-amino-acid chain: Probable protein phosphatase 2C 39 (289 aa).

The PPM-type phosphatase domain maps to 41–288 (THGFHLVKGK…DDISVVVVKF (248 aa)). Residues D78, G79, D240, and D279 each coordinate Mn(2+).

This sequence belongs to the PP2C family. Mg(2+) serves as cofactor. Mn(2+) is required as a cofactor.

It catalyses the reaction O-phospho-L-seryl-[protein] + H2O = L-seryl-[protein] + phosphate. The catalysed reaction is O-phospho-L-threonyl-[protein] + H2O = L-threonyl-[protein] + phosphate. The protein is Probable protein phosphatase 2C 39 of Arabidopsis thaliana (Mouse-ear cress).